We begin with the raw amino-acid sequence, 323 residues long: 2-methylene-furan-3-one reductase (323 aa).

NADP(+) contacts are provided by residues Lys59, 174–175 (GV), 197–200 (STKK), Tyr216, Ile254, 265–267 (FVL), and 312–313 (RA). Residue Lys59 participates in substrate binding.

It belongs to the zinc-containing alcohol dehydrogenase family. Quinone oxidoreductase subfamily. Monomer. Post-translationally, the N-terminus is blocked. In terms of tissue distribution, expressed in parenchyma tissues of red fruits. Not found in vascular tissues. Also detected in the achenes.

The catalysed reaction is 4-hydroxy-2,5-dimethyl-furan-3(2H)-one + NADP(+) = 4-hydroxy-5-methyl-2-methylenefuran-3(2H)-one + NADPH + H(+). Its function is as follows. Enone oxidoreductase involved in the biosynthesis of 4-hydroxy-2,5-dimethyl-3(2H)-furanone (HDMF or furaneol), the key flavor compound in strawberries. Can use both NADH and NADPH as the electron donor. The chain is 2-methylene-furan-3-one reductase (EO) from Fragaria ananassa (Strawberry).